A 904-amino-acid polypeptide reads, in one-letter code: Protein abrupt (904 aa).

Polar residues predominate over residues 1–15 (MTESTQLQTAENNNA). Disordered regions lie at residues 1-30 (MTESTQLQTAENNNAGVVKMEPPPPATSSV) and 53-72 (GSALSPATPPPSLNLSHQQQ). The BTB domain occupies 103–168 (VDVTLACDER…MYNGEVNVSH (66 aa)). Low complexity predominate over residues 204 to 238 (SHNSSNNNNNNSSSNNSLSNNNNNNNNNAESSNHN). Disordered regions lie at residues 204–287 (SHNS…LNSP), 349–390 (ASSA…PPPQ), 411–438 (LLDREFPVAGQHPLTRNRSGRDTSKDRE), and 451–501 (ALEN…NQRS). The span at 239-253 (KISSYLSPNQTSAAC) shows a compositional bias: polar residues. The segment covering 254 to 286 (NNSSNSNSNNHSSSHNNSSSNNISGSLNSSLNS) has biased composition (low complexity). The span at 429 to 438 (SGRDTSKDRE) shows a compositional bias: basic and acidic residues. Over residues 452–461 (LENSNGQQAN) the composition is skewed to polar residues. Position 474 is a phosphoserine (S474). Over residues 481–500 (PSDRGDGQHDGTLDGIDNQR) the composition is skewed to basic and acidic residues. C2H2-type zinc fingers lie at residues 544–567 (RPCPKCGKIYRSAHTLRTHLEDKH) and 573–596 (YRCVLCGTVAKSRNSLHSHMSRQH). Disordered regions lie at residues 633–696 (ELRA…GGSS) and 832–904 (AAGN…VHNT). Residues 642 to 655 (GGSGSSGGGGGGGS) are compositionally biased toward gly residues. Residues 671–682 (DDAEDSDDDPED) show a composition bias toward acidic residues. A phosphoserine mark is found at S837, S846, and S868. Residues 851-868 (MGHDEMAENDGDMRREGS) are compositionally biased toward basic and acidic residues. A compositionally biased stretch (polar residues) spans 876-886 (DNNQSGSNHEV). 2 positions are modified to phosphoserine: S889 and S896.

As to expression, expressed in CNS midline cells during embryonic stages 9-13. Expression also seen in cells of the stomagastric nervous system. Segmentally repeated stripes of ectodermal expression appear at stage 11 that become uniform by stage 12 and throughout embryogenesis. Expressed at variable levels in somatic muscles from stage 16 and in all imaginal disks during larval development. Expression is seen in da neurons that grow in two-dimensional dendrites underneath the epidermis during late embryonic, larval, and pupal stages.

It is found in the nucleus. Its function is as follows. Expression is vital for development; may be involved in transcriptional regulation. In embryos, muscle specific expression is required for segmental nerve b (SNb) motoneuron target recognition within ventral longitudinal muscles. Has a role in establishing and maintaining embryonic muscle attachments, adult sensory cell formation (macrochaetae) and morphogenesis of adult appendages (legs, antenna aristae and male external genitalia). Has a role in the morphogenesis of the class I dendritic neurons: selective expression of ab in class I da neurons plays a pivotal role in forming dendritic arbors, which are characteristic of the class I cells. The development of more complex arbors of class II-IV neurons depends on the absence of ab. In Drosophila melanogaster (Fruit fly), this protein is Protein abrupt (ab).